Here is a 287-residue protein sequence, read N- to C-terminus: 3-methyl-2-oxobutanoate hydroxymethyltransferase (287 aa).

Mg(2+) is bound by residues D67 and D106. Residues 67–68, D106, and K136 each bind 3-methyl-2-oxobutanoate; that span reads DS. A Mg(2+)-binding site is contributed by E138. The active-site Proton acceptor is E204.

This sequence belongs to the PanB family. Homodecamer; pentamer of dimers. Requires Mg(2+) as cofactor.

It localises to the cytoplasm. The enzyme catalyses 3-methyl-2-oxobutanoate + (6R)-5,10-methylene-5,6,7,8-tetrahydrofolate + H2O = 2-dehydropantoate + (6S)-5,6,7,8-tetrahydrofolate. It functions in the pathway cofactor biosynthesis; (R)-pantothenate biosynthesis; (R)-pantoate from 3-methyl-2-oxobutanoate: step 1/2. Catalyzes the reversible reaction in which hydroxymethyl group from 5,10-methylenetetrahydrofolate is transferred onto alpha-ketoisovalerate to form ketopantoate. The chain is 3-methyl-2-oxobutanoate hydroxymethyltransferase from Streptomyces avermitilis (strain ATCC 31267 / DSM 46492 / JCM 5070 / NBRC 14893 / NCIMB 12804 / NRRL 8165 / MA-4680).